Consider the following 122-residue polypeptide: Large ribosomal subunit protein uL14 (122 aa).

The protein belongs to the universal ribosomal protein uL14 family. In terms of assembly, part of the 50S ribosomal subunit. Forms a cluster with proteins L3 and L19. In the 70S ribosome, L14 and L19 interact and together make contacts with the 16S rRNA in bridges B5 and B8.

In terms of biological role, binds to 23S rRNA. Forms part of two intersubunit bridges in the 70S ribosome. The polypeptide is Large ribosomal subunit protein uL14 (Bradyrhizobium sp. (strain BTAi1 / ATCC BAA-1182)).